A 305-amino-acid polypeptide reads, in one-letter code: Ornithine carbamoyltransferase (305 aa).

Residues 52–55 (STRT), Gln-79, Arg-103, and 130–133 (HPCQ) each bind carbamoyl phosphate. L-ornithine is bound by residues Asn-161, Asp-222, and 226-227 (SM). Carbamoyl phosphate contacts are provided by residues 262-263 (CL) and Arg-290.

It belongs to the aspartate/ornithine carbamoyltransferase superfamily. OTCase family.

The protein resides in the cytoplasm. It carries out the reaction carbamoyl phosphate + L-ornithine = L-citrulline + phosphate + H(+). It participates in amino-acid biosynthesis; L-arginine biosynthesis; L-arginine from L-ornithine and carbamoyl phosphate: step 1/3. In terms of biological role, reversibly catalyzes the transfer of the carbamoyl group from carbamoyl phosphate (CP) to the N(epsilon) atom of ornithine (ORN) to produce L-citrulline. The protein is Ornithine carbamoyltransferase of Pelobacter propionicus (strain DSM 2379 / NBRC 103807 / OttBd1).